Here is a 183-residue protein sequence, read N- to C-terminus: Ribonuclease H (183 aa).

In terms of domain architecture, RNase H type-1 spans 2–151; sequence SQARFIAFSD…VDQLAQAAAR (150 aa). Positions 11, 57, 79, and 143 each coordinate Mg(2+).

This sequence belongs to the RNase H family. As to quaternary structure, monomer. It depends on Mg(2+) as a cofactor.

The protein resides in the cytoplasm. The enzyme catalyses Endonucleolytic cleavage to 5'-phosphomonoester.. Endonuclease that specifically degrades the RNA of RNA-DNA hybrids. The protein is Ribonuclease H of Anaeromyxobacter dehalogenans (strain 2CP-1 / ATCC BAA-258).